The chain runs to 206 residues: Small ribosomal subunit protein uS4 (206 aa).

Positions Thr-96–Ile-156 constitute an S4 RNA-binding domain.

Belongs to the universal ribosomal protein uS4 family. Part of the 30S ribosomal subunit. Contacts protein S5. The interaction surface between S4 and S5 is involved in control of translational fidelity.

One of the primary rRNA binding proteins, it binds directly to 16S rRNA where it nucleates assembly of the body of the 30S subunit. Functionally, with S5 and S12 plays an important role in translational accuracy. The polypeptide is Small ribosomal subunit protein uS4 (Shewanella woodyi (strain ATCC 51908 / MS32)).